A 145-amino-acid polypeptide reads, in one-letter code: Allergen Sin a 1 (145 aa).

Residues Ser34–Pro62 are disordered. The propeptide occupies Trp40 to Asn54. The segment covering Leu42 to Glu53 has biased composition (acidic residues).

Belongs to the 2S seed storage albumins family. In terms of assembly, the protein consists of two chains linked by disulfide bonds.

Functionally, this is a 2S seed storage protein. This is Allergen Sin a 1 from Sinapis alba (White mustard).